Here is a 174-residue protein sequence, read N- to C-terminus: ATP-dependent protease subunit HslV (174 aa).

The active site involves T2. Residues A156, C159, and T162 each contribute to the Na(+) site.

Belongs to the peptidase T1B family. HslV subfamily. A double ring-shaped homohexamer of HslV is capped on each side by a ring-shaped HslU homohexamer. The assembly of the HslU/HslV complex is dependent on binding of ATP.

The protein resides in the cytoplasm. It carries out the reaction ATP-dependent cleavage of peptide bonds with broad specificity.. Allosterically activated by HslU binding. Protease subunit of a proteasome-like degradation complex believed to be a general protein degrading machinery. This Agrobacterium fabrum (strain C58 / ATCC 33970) (Agrobacterium tumefaciens (strain C58)) protein is ATP-dependent protease subunit HslV.